A 397-amino-acid chain; its full sequence is Mycinamicin IV hydroxylase/epoxidase (397 aa).

The disordered stretch occupies residues 63 to 86 (RGPSMTRDEPRTRPEMVKGGLLSM). The span at 68–78 (TRDEPRTRPEM) shows a compositional bias: basic and acidic residues. Substrate is bound at residue glycine 81. Residues histidine 91, arginine 95, arginine 288, histidine 344, and cysteine 346 each contribute to the heme site.

Belongs to the cytochrome P450 family. Heme is required as a cofactor.

Its pathway is antibiotic biosynthesis; mycinamicin biosynthesis. Functionally, involved in the biosynthesis of mycinamicin, a 16-membered macrolide antibiotic. Catalyzes consecutive hydroxylation (at C14) and epoxidation (at C12-C13) reactions with mycinamicin IV as initial substrate, leading to mycinamicin II. These reactions require prior dimethylation of 6-deoxyallose to mycinose for effective conversion by the dual function MycG enzyme. The sequence is that of Mycinamicin IV hydroxylase/epoxidase from Micromonospora griseorubida.